A 142-amino-acid chain; its full sequence is MPPKKKVVGLIKLQIQAGQANPAPPVGPALGQHGVNIMEFCKAYNAATEAQRGNVIPVEITVYEDRSFTFALKTPPAAKLLLKAAGVPKGSGEPHKTKVAKVTWDQVREIAETKKEDLNANDIDAAAKIIAGTARSMGITVE.

It belongs to the universal ribosomal protein uL11 family. As to quaternary structure, part of the ribosomal stalk of the 50S ribosomal subunit. Interacts with L10 and the large rRNA to form the base of the stalk. L10 forms an elongated spine to which L12 dimers bind in a sequential fashion forming a multimeric L10(L12)X complex. In terms of processing, one or more lysine residues are methylated.

Functionally, forms part of the ribosomal stalk which helps the ribosome interact with GTP-bound translation factors. This Mycolicibacterium vanbaalenii (strain DSM 7251 / JCM 13017 / BCRC 16820 / KCTC 9966 / NRRL B-24157 / PYR-1) (Mycobacterium vanbaalenii) protein is Large ribosomal subunit protein uL11.